The primary structure comprises 529 residues: Peptide chain release factor 3 (529 aa).

Positions 11–280 (SKRRTFAIIS…GLTDWAPAPL (270 aa)) constitute a tr-type G domain. Residues 20 to 27 (SHPDAGKT), 88 to 92 (DTPGH), and 142 to 145 (NKLD) contribute to the GTP site.

Belongs to the TRAFAC class translation factor GTPase superfamily. Classic translation factor GTPase family. PrfC subfamily.

The protein localises to the cytoplasm. Increases the formation of ribosomal termination complexes and stimulates activities of RF-1 and RF-2. It binds guanine nucleotides and has strong preference for UGA stop codons. It may interact directly with the ribosome. The stimulation of RF-1 and RF-2 is significantly reduced by GTP and GDP, but not by GMP. In Vibrio vulnificus (strain CMCP6), this protein is Peptide chain release factor 3.